The primary structure comprises 130 residues: uncharacterized protein (130 aa).

Residues 1–34 (MTAVGGSPPTRRCPATEDRAPATVATPSSTDPTA) are disordered.

This sequence to M.tuberculosis Rv1583c.

This is an uncharacterized protein from Mycobacterium tuberculosis (strain CDC 1551 / Oshkosh).